Here is a 77-residue protein sequence, read N- to C-terminus: MEVKVFRVKGTFERLGKKQPFTKEYRALKEEHVRELVYSDIGSKHRVPRTKIWIESIEEIKPEEAEDPVVRRLSLEL.

Belongs to the eukaryotic ribosomal protein eL20 family. In terms of assembly, part of the 50S ribosomal subunit. Binds 23S rRNA.

The polypeptide is Large ribosomal subunit protein eL20 (Thermococcus kodakarensis (strain ATCC BAA-918 / JCM 12380 / KOD1) (Pyrococcus kodakaraensis (strain KOD1))).